We begin with the raw amino-acid sequence, 329 residues long: MIRIAIDAMGGDFGAEPIISGVIEALKEAEFKAVLVGDSNAIKPLIPQPYLKNIEFIEATEVISMSDGATDALKRKDSTIYKAVELLKEKEVDAVVSAGHSGATMSLATLRVGRLKNVSRPAIATLMPNSKETATLVLDVGANVDCRSEHLFQFAIMGEAYAKEILGRKEPKVGLLSNGEEESKGNEVSKEAFKLVSRLDSFVGNAEGNQIFDGSIDVMVCDGFMGNILLKTSEGVADAIGKIIKKQVKKSPLAMAGSVLMRKVFKTLKKQVSYDEYGGAPLLGVNGCVIISHGKSNSKAIKNAIFQAIKFANSNINKVIEEELSHFAR.

The protein belongs to the PlsX family. Homodimer. Probably interacts with PlsY.

It localises to the cytoplasm. The catalysed reaction is a fatty acyl-[ACP] + phosphate = an acyl phosphate + holo-[ACP]. It functions in the pathway lipid metabolism; phospholipid metabolism. Its function is as follows. Catalyzes the reversible formation of acyl-phosphate (acyl-PO(4)) from acyl-[acyl-carrier-protein] (acyl-ACP). This enzyme utilizes acyl-ACP as fatty acyl donor, but not acyl-CoA. This chain is Phosphate acyltransferase, found in Campylobacter concisus (strain 13826).